The sequence spans 643 residues: ATP-dependent RNA helicase DeaD (643 aa).

The Q motif signature appears at 6 to 34 (TTFADLGLKAPILEALTDLGYEKPSPIQA). The Helicase ATP-binding domain maps to 37–208 (IPHLLDGRDV…RRFMKEPQEV (172 aa)). An ATP-binding site is contributed by 50-57 (AQTGSGKT). The DEAD box signature appears at 156–159 (DEAD). One can recognise a Helicase C-terminal domain in the interval 232–379 (KNEALVRFLE…EVELPNAELL (148 aa)). 2 disordered regions span residues 440-482 (VPPV…KRER) and 557-643 (MNMQ…GGDA). Composition is skewed to basic and acidic residues over residues 448-482 (PRRE…KRER) and 567-643 (PRTE…GGDA).

Belongs to the DEAD box helicase family. DeaD/CsdA subfamily.

The protein resides in the cytoplasm. It carries out the reaction ATP + H2O = ADP + phosphate + H(+). DEAD-box RNA helicase involved in various cellular processes at low temperature, including ribosome biogenesis, mRNA degradation and translation initiation. The sequence is that of ATP-dependent RNA helicase DeaD from Klebsiella pneumoniae.